The sequence spans 228 residues: Lipoprotein-releasing system ATP-binding protein LolD (228 aa).

In terms of domain architecture, ABC transporter spans 6 to 228 (LRCKELSKSY…KNGILHKEQG (223 aa)). Residue 42-49 (GASGSGKS) coordinates ATP.

The protein belongs to the ABC transporter superfamily. Lipoprotein translocase (TC 3.A.1.125) family. In terms of assembly, the complex is composed of two ATP-binding proteins (LolD) and two transmembrane proteins (LolC and LolE).

The protein resides in the cell inner membrane. Functionally, part of the ABC transporter complex LolCDE involved in the translocation of mature outer membrane-directed lipoproteins, from the inner membrane to the periplasmic chaperone, LolA. Responsible for the formation of the LolA-lipoprotein complex in an ATP-dependent manner. The protein is Lipoprotein-releasing system ATP-binding protein LolD of Idiomarina loihiensis (strain ATCC BAA-735 / DSM 15497 / L2-TR).